Reading from the N-terminus, the 195-residue chain is Dephospho-CoA kinase (195 aa).

The 194-residue stretch at 2 to 195 (IIGLTGGIGV…DIVDSLSLSS (194 aa)) folds into the DPCK domain. An ATP-binding site is contributed by 10-15 (GVGKSF).

Belongs to the CoaE family.

It is found in the cytoplasm. The catalysed reaction is 3'-dephospho-CoA + ATP = ADP + CoA + H(+). Its pathway is cofactor biosynthesis; coenzyme A biosynthesis; CoA from (R)-pantothenate: step 5/5. In terms of biological role, catalyzes the phosphorylation of the 3'-hydroxyl group of dephosphocoenzyme A to form coenzyme A. This chain is Dephospho-CoA kinase, found in Wolbachia sp. subsp. Brugia malayi (strain TRS).